The sequence spans 533 residues: MKEPRIFPRERPTPWTRAPLPPRGRLDGGPVMNAGHPMGVNSDPFLMAAGSLGGNLAPFPRNAAPFQNPSGSLASNPAHFAAGARDPGMTSFPRGMNPTGTGAVSFPRPGGLLGPGPGPGLNPRTGALPGPGPMSNPRLGGLPGPGPMANPRAGGLLGASPDPRSGGPMVPGCGPNMRAGVLSSGTGPPNPRPVGLGPGPSPNLRSSFLGTNPAPRSGMFPGPGLGPNPRACGLGPGLGPNPRAGGLGPGPNLDNRAGGLLGTGSGLNLRMAGPQGLDLAPILRAAGLLGTNSVSFSQASGNMGTNPPTMTRVPGPIGPNTGPSSRGLGLPGPNPSPMSRAPGPMGPNSAHFSRPGGPMGVNAGVFPRGTGSGGLNPNAFSQSSGTLASNPGTFQRSAGLQGSNQAVFPRASGPLGPNPANFPRATGLQGPSPAAFPRSAGPLGPGQVAFPRSAAGHLGSSPAGPVGINPAPFARPTGTLGLNPASFPRMNGPVGKTLVPFPRVGSLPGSNPAAFPRPGGPMAAMYPNGMLPP.

Residues 1-12 are compositionally biased toward basic and acidic residues; that stretch reads MKEPRIFPRERP. Disordered stretches follow at residues 1 to 31, 67 to 164, 177 to 259, and 299 to 350; these read MKEP…GGPV, QNPS…PDPR, MRAG…RAGG, and ASGN…PNSA. Phosphoserine is present on S160. The segment covering 299-309 has biased composition (polar residues); sequence ASGNMGTNPPT. Residue R368 is modified to Asymmetric dimethylarginine. The residue at position 396 (R396) is an Omega-N-methylarginine. At S432 the chain carries Phosphoserine.

It belongs to the DERPC family.

Its subcellular location is the nucleus. Its function is as follows. Potential tumor suppressor. The polypeptide is Decreased expression in renal and prostate cancer protein (Mus musculus (Mouse)).